The sequence spans 225 residues: Uridylate kinase (225 aa).

An ATP-binding site is contributed by 9–10; it reads GS. Residue glycine 44 coordinates UMP. ATP-binding residues include glycine 45 and arginine 49. UMP-binding positions include aspartate 66 and 114–120; that span reads THPGHTT. ATP-binding residues include threonine 140, asparagine 141, tyrosine 146, and aspartate 149.

It belongs to the UMP kinase family. In terms of assembly, homohexamer.

It is found in the cytoplasm. It catalyses the reaction UMP + ATP = UDP + ADP. Its pathway is pyrimidine metabolism; CTP biosynthesis via de novo pathway; UDP from UMP (UMPK route): step 1/1. Its activity is regulated as follows. Inhibited by UTP. In terms of biological role, catalyzes the reversible phosphorylation of UMP to UDP. This chain is Uridylate kinase, found in Thermococcus onnurineus (strain NA1).